A 117-amino-acid chain; its full sequence is MGFRVLVLVVMATTSALPFTFSEEPGRSPFRPALRSEEAQALRHGLTLLLARRADGQPPDMRQPEMRRPEMRRPEVRQPEFAELSVGQRRWDVDQCMYYCLTGVVGYSYTECETMCT.

The N-terminal stretch at 1-22 (MGFRVLVLVVMATTSALPFTFS) is a signal peptide. Positions 23 to 90 (EEPGRSPFRP…FAELSVGQRR (68 aa)) are excised as a propeptide. Residues 53-79 (RADGQPPDMRQPEMRRPEMRRPEVRQP) form a disordered region. The span at 62-79 (RQPEMRRPEMRRPEVRQP) shows a compositional bias: basic and acidic residues. Intrachain disulfides connect Cys96-Cys116 and Cys100-Cys112.

The protein belongs to the conotoxin R superfamily. As to expression, expressed by the venom duct.

It is found in the secreted. This Conus villepinii (Villepin's cone) protein is Conotoxin vil14.3.